The sequence spans 87 residues: Probable Fe(2+)-trafficking protein (87 aa).

This sequence belongs to the Fe(2+)-trafficking protein family.

Could be a mediator in iron transactions between iron acquisition and iron-requiring processes, such as synthesis and/or repair of Fe-S clusters in biosynthetic enzymes. The chain is Probable Fe(2+)-trafficking protein from Francisella tularensis subsp. holarctica (strain FTNF002-00 / FTA).